Here is a 430-residue protein sequence, read N- to C-terminus: Aspartate aminotransferase, mitochondrial (430 aa).

A mitochondrion-targeting transit peptide spans 1–29; it reads MALLHSGRALPGIAAAFHPGLAAAASARA. Thr48 carries the phosphothreonine modification. At Lys59 the chain carries N6-acetyllysine. Gly65 serves as a coordination point for substrate. Residue Lys73 is modified to N6-acetyllysine; alternate. Residue Lys73 is modified to N6-succinyllysine; alternate. Position 82 is an N6-acetyllysine (Lys82). Lys90 carries the post-translational modification N6-acetyllysine; alternate. Lys90 carries the post-translational modification N6-succinyllysine; alternate. Tyr96 carries the post-translational modification 3'-nitrotyrosine; alternate. Tyr96 is subject to Phosphotyrosine; alternate. Residues Lys107 and Lys122 each carry the N6-acetyllysine; alternate modification. N6-succinyllysine; alternate occurs at positions 107 and 122. The residue at position 143 (Ser143) is a Phosphoserine. Residue Lys159 is modified to N6-acetyllysine; alternate. Lys159 is modified (N6-succinyllysine; alternate). Trp162 provides a ligand contact to substrate. At Lys185 the chain carries N6-acetyllysine; alternate. Lys185 carries the N6-succinyllysine; alternate modification. Substrate is bound at residue Asn215. At Lys227 the chain carries N6-succinyllysine. Lys234 bears the N6-acetyllysine mark. N6-acetyllysine; alternate occurs at positions 279 and 296. Lys279 carries the post-translational modification N6-(pyridoxal phosphate)lysine; alternate. At Lys296 the chain carries N6-succinyllysine; alternate. Lys302 carries the post-translational modification N6-acetyllysine. At Lys309 the chain carries N6-acetyllysine; alternate. Lys309 carries the post-translational modification N6-succinyllysine; alternate. Arg313 carries the post-translational modification Asymmetric dimethylarginine. Position 333 is a phosphothreonine (Thr333). Lys338 carries the post-translational modification N6-acetyllysine; alternate. Lys338 bears the N6-succinyllysine; alternate mark. Lys345 is subject to N6-acetyllysine. Lys363 carries the post-translational modification N6-acetyllysine; alternate. Lys363 carries the post-translational modification N6-succinyllysine; alternate. N6-acetyllysine is present on residues Lys364 and Lys387. 2 positions are modified to N6-acetyllysine; alternate: Lys396 and Lys404. 2 positions are modified to N6-succinyllysine; alternate: Lys396 and Lys404. Arg407 contacts substrate.

This sequence belongs to the class-I pyridoxal-phosphate-dependent aminotransferase family. In terms of assembly, homodimer. Requires pyridoxal 5'-phosphate as cofactor.

Its subcellular location is the mitochondrion matrix. The protein localises to the cell membrane. It carries out the reaction L-aspartate + 2-oxoglutarate = oxaloacetate + L-glutamate. The catalysed reaction is L-kynurenine + 2-oxoglutarate = kynurenate + L-glutamate + H2O. Functionally, catalyzes the irreversible transamination of the L-tryptophan metabolite L-kynurenine to form kynurenic acid (KA). As a member of the malate-aspartate shuttle, it has a key role in the intracellular NAD(H) redox balance. Is important for metabolite exchange between mitochondria and cytosol, and for amino acid metabolism. Facilitates cellular uptake of long-chain free fatty acids. The protein is Aspartate aminotransferase, mitochondrial (GOT2) of Pongo abelii (Sumatran orangutan).